Consider the following 552-residue polypeptide: DUF724 domain-containing protein 10 (552 aa).

A disordered region spans residues 308-361; the sequence is SSLTQGSGDKTEVETQRKTFPKKTLPRNQNGSGNDSTLENENSNRKRKREENLC. Residues 333 to 348 show a composition bias toward polar residues; that stretch reads PRNQNGSGNDSTLENE. One can recognise a DUF724 domain in the interval 371–543; it reads ILFEKKLPVW…LEFQATASAP (173 aa).

Expressed at low levels in leaves, stems, flowers and siliques.

Functionally, may be involved in the polar growth of plant cells via transportation of RNAs. This is DUF724 domain-containing protein 10 from Arabidopsis thaliana (Mouse-ear cress).